Here is a 314-residue protein sequence, read N- to C-terminus: 2,3-dihydroxyphenylpropionate/2,3-dihydroxicinnamic acid 1,2-dioxygenase (314 aa).

The active-site Proton donor is the His-115. The Proton acceptor role is filled by His-179.

Belongs to the LigB/MhpB extradiol dioxygenase family. As to quaternary structure, homotetramer. It depends on Fe(2+) as a cofactor.

It catalyses the reaction 3-(2,3-dihydroxyphenyl)propanoate + O2 = (2Z,4E)-2-hydroxy-6-oxonona-2,4-dienedioate + H(+). The catalysed reaction is (2E)-3-(2,3-dihydroxyphenyl)prop-2-enoate + O2 = (2Z,4E,7E)-2-hydroxy-6-oxonona-2,4,7-trienedioate + H(+). It participates in aromatic compound metabolism; 3-phenylpropanoate degradation. Its function is as follows. Catalyzes the non-heme iron(II)-dependent oxidative cleavage of 2,3-dihydroxyphenylpropionic acid and 2,3-dihydroxicinnamic acid into 2-hydroxy-6-ketononadienedioate and 2-hydroxy-6-ketononatrienedioate, respectively. The polypeptide is 2,3-dihydroxyphenylpropionate/2,3-dihydroxicinnamic acid 1,2-dioxygenase (Escherichia coli O157:H7).